A 296-amino-acid chain; its full sequence is Homoserine kinase (296 aa).

Residue 85–95 (PVARGLGSSAA) participates in ATP binding.

It belongs to the GHMP kinase family. Homoserine kinase subfamily.

It is found in the cytoplasm. The catalysed reaction is L-homoserine + ATP = O-phospho-L-homoserine + ADP + H(+). Its pathway is amino-acid biosynthesis; L-threonine biosynthesis; L-threonine from L-aspartate: step 4/5. Catalyzes the ATP-dependent phosphorylation of L-homoserine to L-homoserine phosphate. This is Homoserine kinase from Moorella thermoacetica (strain ATCC 39073 / JCM 9320).